Reading from the N-terminus, the 835-residue chain is MKVLALRHSVAQVYADTQVYTHDDTKDNYENAFLISNLTTHNILYLNYSTKTLEILNKSGIAAVEIQSLEELFTLIRCNFTYDYENNIIYLHDYSYYTNNEIRTDQHWVTKTDIEEYLLPGWKLTYVGYNGSDTRGHYNFSFTCQNAATDDDLIIEYIYSEALDFQNFMLKKIKERMTTSLPIARLSNRVFRDKLFPSLRKKYQHIVNVGPRNESMFTFLNFPSIKQFSNGPYLVKDTIKLKQERWLGKRVSQFDIGQYKNMMNVITTVYYYYNLYQKKPIIYMVGSAPSYWIYDVKQYSDFTFETWDPLDTPYSSIHHKELFFEKDVAKLRDNSILYIDIRTDRRNADWREWRKTVEEQTISNLKLAYQYLASGKSKVCCVKMTAMDLELPISAKLLHHPTTEIRSEFYLLLDIWDISNVKRFIPKGVLYSFINNIITENVFIQPPFKIKTSKNEYIVALYALSNDFNDRMNVINLINNQKQSLITVRINNTFKDEPKVGFKNIYDWTFLPTDFNTTDSIITSYDGCLGIFGLSISLASKPTGNNHLFILNGTDKYYKLDQFANHTGISRRSHQIRFSESATSYSGYIFRDLSNNNFNLIGTNIENSVSGHVYNALIYYRYNYSFDLKRWIYLHSIEKADIEGGKYYEHAPIELIYACRSAKEFALLQDDLTVLRYANEIERYIHKVYSITYADDPNYFIGIKFKHIPYKYDVKIPHLTFGVLFISDNMIPDVTRIIKDMKKELFEMDVTTSYTYMLSDGTYVANISGVLSTYFKMYNLFYKNQITFGQSRMFIPHITLSFSSRKTVRIETVKLKIDSIYLRKIRGDTVFDMSE.

An N7-methyltransferase activity region spans residues 171–245 (KKIKERMTTS…KDTIKLKQER (75 aa)). Residues 246–428 (WLGKRVSQFD…SNVKRFIPKG (183 aa)) are 2'-O-methyltransferase activity. The N7-methyltransferase activity stretch occupies residues 429–555 (VLYSFINNII…NHLFILNGTD (127 aa)). Positions 556 to 692 (KYYKLDQFAN…RYIHKVYSIT (137 aa)) are GTase/RTPase activity. The interval 693–835 (YADDPNYFIG…RGDTVFDMSE (143 aa)) is 2'-5'-phosphodiesterase activity. Active-site for 2'-5'-phosphodiesterase activity residues include histidine 718, threonine 720, histidine 797, and threonine 799.

It belongs to the rotavirus VP3 family. In terms of assembly, interacts with VP1. Interacts with VP2.

It localises to the virion. The catalysed reaction is a 5'-end diphospho-ribonucleoside in mRNA + GTP + H(+) = a 5'-end (5'-triphosphoguanosine)-ribonucleoside in mRNA + diphosphate. It catalyses the reaction a 5'-end (5'-triphosphoguanosine)-ribonucleoside in mRNA + S-adenosyl-L-methionine = a 5'-end (N(7)-methyl 5'-triphosphoguanosine)-ribonucleoside in mRNA + S-adenosyl-L-homocysteine. The enzyme catalyses 5'-triphosphoadenylyl-(2'-&gt;5')-adenylyl-(2'-&gt;5')-adenosine + 2 H2O = 2 AMP + ATP + 2 H(+). Functionally, multifunctional enzyme involved in mRNA capping. Catalyzes the formation of the 5' cap structure on the viral plus-strand transcripts. Specifically binds to GTP and displays guanylyltransferase and methyltransferase activities. Has affinity for ssRNA but not for dsRNA. Capping activity is non-specific and caps RNAs that initiate with either a G or an A residue. Together with VP1 polymerase, forms a VP1-VP3 complex positioned near the channels situated at each of the five-fold vertices of the core. Following infection, the outermost layer of the virus is lost, leaving a double-layered particle (DLP) made up of the core and VP6 shell. VP1 then catalyzes the transcription of fully conservative plus-strand genomic RNAs that are capped by VP3 and extruded through the DLP's channels into the cytoplasm where they function as mRNAs for translation of viral proteins. DLPs probably have an RNA triphosphatase activity as well, whereas open cores do not. In terms of biological role, counteracts the host innate immune response thanks to its phosphodiesterase that degrades the 5'-triphosphorylated, 2'-5' linked adenylate oligomers produced by the host cell IFN-inducible 2',5'-oligoadenylate synthetase (OAS). The host RNaseL is therefore not activated. The sequence is that of Protein VP3 from Macaca mulatta (Rhesus macaque).